Here is a 233-residue protein sequence, read N- to C-terminus: 2-C-methyl-D-erythritol 4-phosphate cytidylyltransferase (233 aa).

It belongs to the IspD/TarI cytidylyltransferase family. IspD subfamily.

The enzyme catalyses 2-C-methyl-D-erythritol 4-phosphate + CTP + H(+) = 4-CDP-2-C-methyl-D-erythritol + diphosphate. It functions in the pathway isoprenoid biosynthesis; isopentenyl diphosphate biosynthesis via DXP pathway; isopentenyl diphosphate from 1-deoxy-D-xylulose 5-phosphate: step 2/6. Its function is as follows. Catalyzes the formation of 4-diphosphocytidyl-2-C-methyl-D-erythritol from CTP and 2-C-methyl-D-erythritol 4-phosphate (MEP). The protein is 2-C-methyl-D-erythritol 4-phosphate cytidylyltransferase of Gloeobacter violaceus (strain ATCC 29082 / PCC 7421).